A 350-amino-acid polypeptide reads, in one-letter code: Type II restriction enzyme NgoBI (350 aa).

It catalyses the reaction Endonucleolytic cleavage of DNA to give specific double-stranded fragments with terminal 5'-phosphates.. Its function is as follows. A P subtype restriction enzyme that recognizes the double-stranded sequence 5'-RGCGCY-3'; the cleavage site is unknown. This chain is Type II restriction enzyme NgoBI (ngoBIR), found in Neisseria gonorrhoeae.